The chain runs to 894 residues: Alanine--tRNA ligase (894 aa).

It belongs to the class-II aminoacyl-tRNA synthetase family.

It is found in the cytoplasm. The enzyme catalyses tRNA(Ala) + L-alanine + ATP = L-alanyl-tRNA(Ala) + AMP + diphosphate. Functionally, catalyzes the attachment of alanine to tRNA(Ala) in a two-step reaction: alanine is first activated by ATP to form Ala-AMP and then transferred to the acceptor end of tRNA(Ala). Also edits incorrectly charged Ser-tRNA(Ala) and Gly-tRNA(Ala) via its editing domain. This Leuconostoc citreum (strain KM20) protein is Alanine--tRNA ligase (alaS).